We begin with the raw amino-acid sequence, 235 residues long: Ribonuclease HII (235 aa).

Residues 23 to 212 (GLVAGVDEAG…VAHVVSIARM (190 aa)) form the RNase H type-2 domain. Residues Asp-29, Glu-30, and Asp-121 each contribute to the a divalent metal cation site.

The protein belongs to the RNase HII family. Mn(2+) serves as cofactor. It depends on Mg(2+) as a cofactor.

Its subcellular location is the cytoplasm. The catalysed reaction is Endonucleolytic cleavage to 5'-phosphomonoester.. In terms of biological role, endonuclease that specifically degrades the RNA of RNA-DNA hybrids. The protein is Ribonuclease HII of Delftia acidovorans (strain DSM 14801 / SPH-1).